Reading from the N-terminus, the 328-residue chain is WUSCHEL-related homeobox 6 (328 aa).

Over residues 1-11 (MEGSSNSPDRQ) the composition is skewed to polar residues. Positions 1–45 (MEGSSNSPDRQSSGGSPPEERGGGGSGGGGGRSAAGEPVRSRWTP) are disordered. A compositionally biased stretch (gly residues) spans 23 to 33 (GGGSGGGGGRS). A DNA-binding region (homeobox; WUS-type) is located at residues 38–102 (PVRSRWTPKP…NRRSRSRRRQ (65 aa)).

It belongs to the WUS homeobox family.

The protein localises to the nucleus. Its function is as follows. Transcription factor which may be involved in developmental processes. The polypeptide is WUSCHEL-related homeobox 6 (WOX6) (Oryza sativa subsp. indica (Rice)).